Consider the following 207-residue polypeptide: Thiamine-phosphate synthase (207 aa).

4-amino-2-methyl-5-(diphosphooxymethyl)pyrimidine-binding positions include 38–42 and N70; that span reads QYRNK. Mg(2+)-binding residues include D71 and D90. S109 is a binding site for 4-amino-2-methyl-5-(diphosphooxymethyl)pyrimidine. 136–138 serves as a coordination point for 2-[(2R,5Z)-2-carboxy-4-methylthiazol-5(2H)-ylidene]ethyl phosphate; the sequence is TAT. A 4-amino-2-methyl-5-(diphosphooxymethyl)pyrimidine-binding site is contributed by K139. 2-[(2R,5Z)-2-carboxy-4-methylthiazol-5(2H)-ylidene]ethyl phosphate is bound by residues G165 and 185 to 186; that span reads VS.

Belongs to the thiamine-phosphate synthase family. The cofactor is Mg(2+).

The catalysed reaction is 2-[(2R,5Z)-2-carboxy-4-methylthiazol-5(2H)-ylidene]ethyl phosphate + 4-amino-2-methyl-5-(diphosphooxymethyl)pyrimidine + 2 H(+) = thiamine phosphate + CO2 + diphosphate. It catalyses the reaction 2-(2-carboxy-4-methylthiazol-5-yl)ethyl phosphate + 4-amino-2-methyl-5-(diphosphooxymethyl)pyrimidine + 2 H(+) = thiamine phosphate + CO2 + diphosphate. It carries out the reaction 4-methyl-5-(2-phosphooxyethyl)-thiazole + 4-amino-2-methyl-5-(diphosphooxymethyl)pyrimidine + H(+) = thiamine phosphate + diphosphate. The protein operates within cofactor biosynthesis; thiamine diphosphate biosynthesis; thiamine phosphate from 4-amino-2-methyl-5-diphosphomethylpyrimidine and 4-methyl-5-(2-phosphoethyl)-thiazole: step 1/1. Functionally, condenses 4-methyl-5-(beta-hydroxyethyl)thiazole monophosphate (THZ-P) and 2-methyl-4-amino-5-hydroxymethyl pyrimidine pyrophosphate (HMP-PP) to form thiamine monophosphate (TMP). In Xanthomonas campestris pv. campestris (strain 8004), this protein is Thiamine-phosphate synthase.